Reading from the N-terminus, the 325-residue chain is uncharacterized protein (325 aa).

The disordered stretch occupies residues 1 to 32 (MKQEYIPLDEFPNKSNEGMLNDEGTSSSGLST). Residues 23–32 (EGTSSSGLST) show a composition bias toward low complexity. Residues 135–223 (AEEISNLKTS…LKKREDLLRL (89 aa)) are a coiled coil.

It is found in the cytoplasm. The protein localises to the cytoskeleton. The protein resides in the microtubule organizing center. Its subcellular location is the spindle pole body. This is an uncharacterized protein from Schizosaccharomyces pombe (strain 972 / ATCC 24843) (Fission yeast).